A 154-amino-acid chain; its full sequence is Small ribosomal subunit protein uS15 (154 aa).

The segment at Met-1–Trp-23 is disordered.

Belongs to the universal ribosomal protein uS15 family. As to quaternary structure, part of the 30S ribosomal subunit.

In Staphylothermus marinus (strain ATCC 43588 / DSM 3639 / JCM 9404 / F1), this protein is Small ribosomal subunit protein uS15.